Reading from the N-terminus, the 600-residue chain is Adenine deaminase (600 aa).

The protein belongs to the metallo-dependent hydrolases superfamily. Adenine deaminase family. Mn(2+) is required as a cofactor.

The enzyme catalyses adenine + H2O + H(+) = hypoxanthine + NH4(+). The sequence is that of Adenine deaminase from Bradyrhizobium sp. (strain BTAi1 / ATCC BAA-1182).